A 365-amino-acid polypeptide reads, in one-letter code: Histidinol-phosphate aminotransferase (365 aa).

N6-(pyridoxal phosphate)lysine is present on Lys220.

The protein belongs to the class-II pyridoxal-phosphate-dependent aminotransferase family. Histidinol-phosphate aminotransferase subfamily. As to quaternary structure, homodimer. Pyridoxal 5'-phosphate is required as a cofactor.

It carries out the reaction L-histidinol phosphate + 2-oxoglutarate = 3-(imidazol-4-yl)-2-oxopropyl phosphate + L-glutamate. It functions in the pathway amino-acid biosynthesis; L-histidine biosynthesis; L-histidine from 5-phospho-alpha-D-ribose 1-diphosphate: step 7/9. The sequence is that of Histidinol-phosphate aminotransferase from Neisseria meningitidis serogroup B (strain ATCC BAA-335 / MC58).